The sequence spans 150 residues: Transcriptional repressor NrdR (150 aa).

The segment at 3–34 (CPFCGYEDTFVIDTREIEDQRVIRRRRECPNC) is a zinc-finger region. Residues 49–139 (IMVIKKDGRR…VYQEFSSLEE (91 aa)) form the ATP-cone domain.

This sequence belongs to the NrdR family. The cofactor is Zn(2+).

Functionally, negatively regulates transcription of bacterial ribonucleotide reductase nrd genes and operons by binding to NrdR-boxes. The protein is Transcriptional repressor NrdR of Dictyoglomus thermophilum (strain ATCC 35947 / DSM 3960 / H-6-12).